A 98-amino-acid chain; its full sequence is Large ribosomal subunit protein uL23 (98 aa).

Belongs to the universal ribosomal protein uL23 family. In terms of assembly, part of the 50S ribosomal subunit. Contacts protein L29, and trigger factor when it is bound to the ribosome.

Functionally, one of the early assembly proteins it binds 23S rRNA. One of the proteins that surrounds the polypeptide exit tunnel on the outside of the ribosome. Forms the main docking site for trigger factor binding to the ribosome. The protein is Large ribosomal subunit protein uL23 of Acidothermus cellulolyticus (strain ATCC 43068 / DSM 8971 / 11B).